A 520-amino-acid polypeptide reads, in one-letter code: Type I restriction enzyme EcoR124I/EcoR124II methylase subunit (520 aa).

The interval 10 to 190 (AELHRQIWQI…YEFLISNYAA (181 aa)) is N-terminal domain. S-adenosyl-L-methionine-binding positions include 198–203 (EFFTPQ), 230–232 (SGS), and glutamate 254. Residues 198 to 473 (EFFTPQHVSK…NDYNLSVSSY (276 aa)) form a catalytic domain region. Residues 481-510 (EIIDIAELNAELKTTVSKIDQLRKDIDAIV) form a C-terminal tail region.

It belongs to the N(4)/N(6)-methyltransferase family. The type I restriction/modification system is composed of three polypeptides R, M and S; the restriction enzyme has stoichiometry R(2)M(2)S(1) while the methyltransferase is M(2)S(1). There is an equilibrium between R(2)M(2)S(1) and R(1)M(2)S(1); the latter is methylation and translocation proficient but restriction deficient. As to quaternary structure, (Microbial infection) Holoenenzyme interacts with Escherichia phage T7 protein Ocr; this interaction leads to the inhibition of the restriction activity, but may still allow methylation and translocation.

The enzyme catalyses a 2'-deoxyadenosine in DNA + S-adenosyl-L-methionine = an N(6)-methyl-2'-deoxyadenosine in DNA + S-adenosyl-L-homocysteine + H(+). Functionally, the subtype gamma methyltransferase (M) subunit of a type I restriction enzyme. The M and S subunits together form a methyltransferase (MTase) that methylates A-3 on the top and bottom strand of the sequence 5'-GAAN(6)RTCG-3' (for EcoR124I) and 5'-GAAN(7)RTCG-3' (for EcoR124II). In the presence of the R subunit the complex can also act as an endonuclease, binding to the same target sequence but cutting the DNA some distance from this site. Whether the DNA is cut or modified depends on the methylation state of the target sequence. When the target site is unmodified, the DNA is cut. When the target site is hemimethylated, the complex acts as a maintenance MTase modifying the DNA so that both strands become methylated. After locating a non-methylated recognition site, the enzyme complex serves as a molecular motor that translocates DNA in an ATP-dependent manner until a collision occurs that triggers cleavage. The R(1)M(2)S(1) complex translocates an average of 555 bp/second on nicked DNA; the R(2)M(2)S(1) complex translocates at double that speed. The 2 R subunit motors are independent and track along the helical pitch of the DNA, inducing positive supercoiling ahead of themselves. This Escherichia coli protein is Type I restriction enzyme EcoR124I/EcoR124II methylase subunit (hsdM).